The following is a 199-amino-acid chain: Desiccation stress protein DSP-22, chloroplastic (199 aa).

The transit peptide at 1 to 52 (MASSTCYATIPAMSCRGQSTITRFGPNNLFLGKQSYELPLMRRNAKFTVRSM) directs the protein to the chloroplast. Residues 53–62 (REDNEKEEQQ) are compositionally biased toward basic and acidic residues. Residues 53-82 (REDNEKEEQQQQKQQQTHDGGPDLTPNRTE) form a disordered region. 2 helical membrane passes run 130–152 (FNGG…LIPI) and 172–191 (IWNG…TEYV).

It belongs to the ELIP/psbS family. Preferentially localized in the chloroplast-rich palisade parenchyma cells, in extracts of desiccated leaves, in seeds, but not in roots or untreated leaves.

The protein resides in the plastid. It localises to the chloroplast thylakoid membrane. Functionally, possibly exerts a protective role during water loss. This chain is Desiccation stress protein DSP-22, chloroplastic (DSP-22), found in Craterostigma plantagineum (Blue gem).